Consider the following 920-residue polypeptide: Zinc finger MIZ domain-containing protein 2 (920 aa).

Disordered regions lie at residues 1-22 and 54-79; these read MNSM…GSFA and SQVL…VAGG. The span at 60–79 shows a compositional bias: low complexity; it reads PMGPAGSPSGSSMMPGVAGG. Position 111 is an omega-N-methylarginine (Arg111). 2 disordered regions span residues 243–265 and 286–391; these read GQRL…RQGV and PSTA…SPNQ. Asymmetric dimethylarginine occurs at positions 245 and 262. Residues 295-304 are compositionally biased toward pro residues; that stretch reads PGQPPAPSPS. Residues 334-354 are compositionally biased toward polar residues; the sequence is EQFNGQGASFNGGSVSYSQPG. The span at 366–379 shows a compositional bias: pro residues; that stretch reads PSSPLPGNPTPPMT. Over residues 380–389 the composition is skewed to low complexity; that stretch reads PSSSVPYMSP. Residues Lys402 and Lys457 each participate in a glycyl lysine isopeptide (Lys-Gly) (interchain with G-Cter in SUMO2) cross-link. The interaction with AR stretch occupies residues 435 to 506; that stretch reads PFRLQHNLAV…TIERGDNKTS (72 aa). The SP-RING-type zinc-finger motif lies at 585–671; sequence GEDGVEQTAI…IYIQNSDYEE (87 aa). Zn(2+) contacts are provided by Cys616, His618, Cys639, and Cys642. Residue Lys692 forms a Glycyl lysine isopeptide (Lys-Gly) (interchain with G-Cter in SUMO2) linkage. Residues 803–920 are disordered; the sequence is SQMAPAGHLD…DDLLSLFENN (118 aa). Low complexity predominate over residues 876–890; it reads AGEAPEPALDLLPEL. Polar residues predominate over residues 906–920; the sequence is PTNNNDDLLSLFENN.

Interacts with AR, SMARCA4/BRG1 and SMARCE1/BAF57. Interaction with either SMARCA4 and SMARCE1 enhances AR-mediated transcription. In terms of tissue distribution, expressed most abundantly in testis with lower levels in heart, brain, pancreas, prostate and ovary.

It is found in the nucleus. Increases ligand-dependent transcriptional activity of AR and other nuclear hormone receptors. The protein is Zinc finger MIZ domain-containing protein 2 (ZMIZ2) of Homo sapiens (Human).